A 123-amino-acid chain; its full sequence is Immunoglobulin lambda variable 5-39 (123 aa).

The N-terminal stretch at 1-19 (MAWTPLLLLLLSHCTGSLS) is a signal peptide. A framework-1 region spans residues 20-44 (QPVLTQPTSLSASPGASARFTCTLR). The Ig-like domain maps to 21–123 (PVLTQPTSLS…YCAIWYSSTS (103 aa)). Residues C41 and C115 are joined by a disulfide bond. The complementarity-determining-1 stretch occupies residues 45–53 (SGINVGTYR). Residues 54–70 (IYWYQQKPGSLPRYLLR) form a framework-2 region. Residues 71–77 (YKSDSDK) form a complementarity-determining-2 region. The interval 78–115 (QQGSGVPSRFSGSKDASTNAGLLLISGLQSEDEADYYC) is framework-3. Positions 116 to 123 (AIWYSSTS) are complementarity-determining-3.

Immunoglobulins are composed of two identical heavy chains and two identical light chains; disulfide-linked.

The protein localises to the secreted. Its subcellular location is the cell membrane. In terms of biological role, v region of the variable domain of immunoglobulin light chains that participates in the antigen recognition. Immunoglobulins, also known as antibodies, are membrane-bound or secreted glycoproteins produced by B lymphocytes. In the recognition phase of humoral immunity, the membrane-bound immunoglobulins serve as receptors which, upon binding of a specific antigen, trigger the clonal expansion and differentiation of B lymphocytes into immunoglobulins-secreting plasma cells. Secreted immunoglobulins mediate the effector phase of humoral immunity, which results in the elimination of bound antigens. The antigen binding site is formed by the variable domain of one heavy chain, together with that of its associated light chain. Thus, each immunoglobulin has two antigen binding sites with remarkable affinity for a particular antigen. The variable domains are assembled by a process called V-(D)-J rearrangement and can then be subjected to somatic hypermutations which, after exposure to antigen and selection, allow affinity maturation for a particular antigen. The sequence is that of Immunoglobulin lambda variable 5-39 from Homo sapiens (Human).